The primary structure comprises 98 residues: MSNNNYERLITKKDVYRVANERLYYLFSLAFQTGDERYIDLMERIGRRMDITLPQDIKRMYCKKCKKPYKNVRVRLKKNVITVTCLECGDIRRFQINR.

Residues C62, C65, C85, and C88 each contribute to the Zn(2+) site.

The protein belongs to the eukaryotic/archaeal RNase P protein component 4 family. As to quaternary structure, consists of a catalytic RNA component and at least 4-5 protein subunits. The cofactor is Zn(2+).

It is found in the cytoplasm. It carries out the reaction Endonucleolytic cleavage of RNA, removing 5'-extranucleotides from tRNA precursor.. Its function is as follows. Part of ribonuclease P, a protein complex that generates mature tRNA molecules by cleaving their 5'-ends. This Thermoplasma volcanium (strain ATCC 51530 / DSM 4299 / JCM 9571 / NBRC 15438 / GSS1) protein is Ribonuclease P protein component 4.